The chain runs to 130 residues: Phosphoribosyl-AMP cyclohydrolase (130 aa).

Asp78 is a Mg(2+) binding site. Residue Cys79 participates in Zn(2+) binding. Residues Asp80 and Asp82 each coordinate Mg(2+). Zn(2+) is bound by residues Cys96 and Cys103.

It belongs to the PRA-CH family. As to quaternary structure, homodimer. It depends on Mg(2+) as a cofactor. Zn(2+) serves as cofactor.

It is found in the cytoplasm. It catalyses the reaction 1-(5-phospho-beta-D-ribosyl)-5'-AMP + H2O = 1-(5-phospho-beta-D-ribosyl)-5-[(5-phospho-beta-D-ribosylamino)methylideneamino]imidazole-4-carboxamide. The protein operates within amino-acid biosynthesis; L-histidine biosynthesis; L-histidine from 5-phospho-alpha-D-ribose 1-diphosphate: step 3/9. In terms of biological role, catalyzes the hydrolysis of the adenine ring of phosphoribosyl-AMP. The protein is Phosphoribosyl-AMP cyclohydrolase of Methylobacillus flagellatus (strain ATCC 51484 / DSM 6875 / VKM B-1610 / KT).